The chain runs to 198 residues: Inosine triphosphate pyrophosphatase (198 aa).

At Ala2 the chain carries N-acetylalanine. 14–19 (TGNAKK) lines the ITP pocket. Glu44 is a binding site for Mg(2+). Residues Lys56, 72–73 (DT), and Lys89 contribute to the ITP site. A Phosphoserine modification is found at Ser146. ITP is bound by residues 149–152 (FGWD), Lys172, and 177–178 (HR).

This sequence belongs to the HAM1 NTPase family. Homodimer. Mg(2+) serves as cofactor. Requires Mn(2+) as cofactor.

Its subcellular location is the cytoplasm. The enzyme catalyses ITP + H2O = IMP + diphosphate + H(+). It catalyses the reaction dITP + H2O = dIMP + diphosphate + H(+). The catalysed reaction is XTP + H2O = XMP + diphosphate + H(+). It carries out the reaction N(6)-hydroxy-dATP + H2O = N(6)-hydroxy-dAMP + diphosphate + H(+). In terms of biological role, pyrophosphatase that hydrolyzes the non-canonical purine nucleotides inosine triphosphate (ITP), deoxyinosine triphosphate (dITP) as well as 2'-deoxy-N-6-hydroxylaminopurine triphosphate (dHAPTP) and xanthosine 5'-triphosphate (XTP) to their respective monophosphate derivatives. The enzyme does not distinguish between the deoxy- and ribose forms. Probably excludes non-canonical purines from RNA and DNA precursor pools, thus preventing their incorporation into RNA and DNA and avoiding chromosomal lesions. This Rattus norvegicus (Rat) protein is Inosine triphosphate pyrophosphatase (Itpa).